We begin with the raw amino-acid sequence, 313 residues long: uncharacterized protein (313 aa).

This sequence to M.jannaschii MJ0977 C-terminal region.

This is an uncharacterized protein from Methanocaldococcus jannaschii (strain ATCC 43067 / DSM 2661 / JAL-1 / JCM 10045 / NBRC 100440) (Methanococcus jannaschii).